We begin with the raw amino-acid sequence, 306 residues long: Pseudouridine-5'-phosphate glycosidase (306 aa).

The active-site Proton donor is glutamate 27. Substrate is bound by residues lysine 88 and valine 108. Aspartate 140 contacts Mn(2+). 142–144 (SAD) serves as a coordination point for substrate. Lysine 161 acts as the Nucleophile in catalysis.

Belongs to the pseudouridine-5'-phosphate glycosidase family. As to quaternary structure, homotrimer. It depends on Mn(2+) as a cofactor.

It carries out the reaction D-ribose 5-phosphate + uracil = psi-UMP + H2O. Functionally, catalyzes the reversible cleavage of pseudouridine 5'-phosphate (PsiMP) to ribose 5-phosphate and uracil. Functions biologically in the cleavage direction, as part of a pseudouridine degradation pathway. This is Pseudouridine-5'-phosphate glycosidase from Petrotoga mobilis (strain DSM 10674 / SJ95).